Here is a 330-residue protein sequence, read N- to C-terminus: Phytanoyl-CoA hydroxylase-interacting protein (330 aa).

The region spanning T6–Y115 is the Fibronectin type-III domain. N14 and N325 each carry an N-linked (GlcNAc...) asparagine glycan.

The protein belongs to the PHYHIP family. As to quaternary structure, interacts with PHYH and ADGRB1. As to expression, highly expressed in the brain.

Functionally, its interaction with PHYH suggests a role in the development of the central system. The protein is Phytanoyl-CoA hydroxylase-interacting protein (Phyhip) of Mus musculus (Mouse).